Reading from the N-terminus, the 152-residue chain is Large ribosomal subunit protein bL17 (152 aa).

Residues 121 to 140 (APSASQKTGKQDRAKRVKGS) are disordered.

It belongs to the bacterial ribosomal protein bL17 family. Part of the 50S ribosomal subunit. Contacts protein L32.

In Pelodictyon phaeoclathratiforme (strain DSM 5477 / BU-1), this protein is Large ribosomal subunit protein bL17.